The following is a 389-amino-acid chain: Protein IQ-domain 26 (389 aa).

2 IQ domains span residues 106–134 and 135–157; these read ERWAAVKIQSVFKGYLARKALRALKGLVK and LQALVRGYLVRKRAAETLHSMQA. The calmodulin-binding stretch occupies residues 137–151; the sequence is ALVRGYLVRKRAAET. Residues 347-374 are disordered; it reads SVSGVRMVQPQPQPQTQTQQQKRSPCSY.

The protein belongs to the IQD family. As to quaternary structure, binds to multiple calmodulin (CaM) in the presence of Ca(2+) and CaM-like proteins.

The protein localises to the cell membrane. Its subcellular location is the cytoplasm. It localises to the cytoskeleton. Functionally, may be involved in cooperative interactions with calmodulins or calmodulin-like proteins. Recruits calmodulin proteins to microtubules, thus being a potential scaffold in cellular signaling and trafficking. May associate with nucleic acids and regulate gene expression at the transcriptional or post-transcriptional level. The polypeptide is Protein IQ-domain 26 (Arabidopsis thaliana (Mouse-ear cress)).